A 452-amino-acid polypeptide reads, in one-letter code: UPF0210 protein CHY_1509 (452 aa).

The protein belongs to the UPF0210 family. As to quaternary structure, homodimer.

This Carboxydothermus hydrogenoformans (strain ATCC BAA-161 / DSM 6008 / Z-2901) protein is UPF0210 protein CHY_1509.